The chain runs to 343 residues: Protein RecA (343 aa).

66–73 (GPESSGKT) contributes to the ATP binding site.

It belongs to the RecA family.

It localises to the cytoplasm. In terms of biological role, can catalyze the hydrolysis of ATP in the presence of single-stranded DNA, the ATP-dependent uptake of single-stranded DNA by duplex DNA, and the ATP-dependent hybridization of homologous single-stranded DNAs. It interacts with LexA causing its activation and leading to its autocatalytic cleavage. This chain is Protein RecA, found in Rickettsia massiliae (strain Mtu5).